Consider the following 627-residue polypeptide: UvrABC system protein C (627 aa).

Positions 26-105 (PEPGVYFMRD…IKQHQPYFNV (80 aa)) constitute a GIY-YIG domain. The region spanning 215-250 (QELIDILSEQMEKAAEALNFEVAARIRDQIAGLKSL) is the UVR domain.

It belongs to the UvrC family. As to quaternary structure, interacts with UvrB in an incision complex.

The protein localises to the cytoplasm. Functionally, the UvrABC repair system catalyzes the recognition and processing of DNA lesions. UvrC both incises the 5' and 3' sides of the lesion. The N-terminal half is responsible for the 3' incision and the C-terminal half is responsible for the 5' incision. This is UvrABC system protein C from Trichormus variabilis (strain ATCC 29413 / PCC 7937) (Anabaena variabilis).